Consider the following 100-residue polypeptide: Small ribosomal subunit protein uS14c (100 aa).

Belongs to the universal ribosomal protein uS14 family. In terms of assembly, part of the 30S ribosomal subunit.

It localises to the plastid. The protein resides in the chloroplast. Functionally, binds 16S rRNA, required for the assembly of 30S particles. In Physcomitrium patens (Spreading-leaved earth moss), this protein is Small ribosomal subunit protein uS14c.